A 269-amino-acid chain; its full sequence is Shikimate dehydrogenase (NADP(+)) (269 aa).

Residues 15 to 17 (SLS) and T62 contribute to the shikimate site. The Proton acceptor role is filled by K66. Residues N86 and D99 each coordinate shikimate. Residues 123-127 (GAGGA), 146-151 (NRTTAK), and L213 each bind NADP(+). Residue Y215 participates in shikimate binding. Position 236 (G236) interacts with NADP(+).

Belongs to the shikimate dehydrogenase family. As to quaternary structure, homodimer.

The enzyme catalyses shikimate + NADP(+) = 3-dehydroshikimate + NADPH + H(+). Its pathway is metabolic intermediate biosynthesis; chorismate biosynthesis; chorismate from D-erythrose 4-phosphate and phosphoenolpyruvate: step 4/7. In terms of biological role, involved in the biosynthesis of the chorismate, which leads to the biosynthesis of aromatic amino acids. Catalyzes the reversible NADPH linked reduction of 3-dehydroshikimate (DHSA) to yield shikimate (SA). The sequence is that of Shikimate dehydrogenase (NADP(+)) from Methanocella arvoryzae (strain DSM 22066 / NBRC 105507 / MRE50).